Here is a 569-residue protein sequence, read N- to C-terminus: Sulfite reductase [NADPH] hemoprotein beta-component (569 aa).

Residues C434, C440, C479, and C483 each coordinate [4Fe-4S] cluster. C483 is a siroheme binding site.

It belongs to the nitrite and sulfite reductase 4Fe-4S domain family. In terms of assembly, alpha(8)-beta(8). The alpha component is a flavoprotein, the beta component is a hemoprotein. The cofactor is siroheme. [4Fe-4S] cluster serves as cofactor.

It carries out the reaction hydrogen sulfide + 3 NADP(+) + 3 H2O = sulfite + 3 NADPH + 4 H(+). It participates in sulfur metabolism; hydrogen sulfide biosynthesis; hydrogen sulfide from sulfite (NADPH route): step 1/1. Functionally, component of the sulfite reductase complex that catalyzes the 6-electron reduction of sulfite to sulfide. This is one of several activities required for the biosynthesis of L-cysteine from sulfate. In Staphylococcus saprophyticus subsp. saprophyticus (strain ATCC 15305 / DSM 20229 / NCIMB 8711 / NCTC 7292 / S-41), this protein is Sulfite reductase [NADPH] hemoprotein beta-component.